The primary structure comprises 642 residues: Threonine--tRNA ligase (642 aa).

The TGS domain maps to 1–61 (MPVITLPDGS…ETDATLSIIT (61 aa)). The segment at 243–534 (DHRKIGKQLD…LTEETAGYFP (292 aa)) is catalytic. Zn(2+) contacts are provided by Cys334, His385, and His511.

Belongs to the class-II aminoacyl-tRNA synthetase family. Homodimer. Zn(2+) is required as a cofactor.

The protein localises to the cytoplasm. It carries out the reaction tRNA(Thr) + L-threonine + ATP = L-threonyl-tRNA(Thr) + AMP + diphosphate + H(+). Its function is as follows. Catalyzes the attachment of threonine to tRNA(Thr) in a two-step reaction: L-threonine is first activated by ATP to form Thr-AMP and then transferred to the acceptor end of tRNA(Thr). Also edits incorrectly charged L-seryl-tRNA(Thr). This is Threonine--tRNA ligase from Tolumonas auensis (strain DSM 9187 / NBRC 110442 / TA 4).